The sequence spans 29 residues: Dermaseptin-S5 (29 aa).

This sequence belongs to the frog skin active peptide (FSAP) family. Dermaseptin subfamily. In terms of tissue distribution, expressed by the skin glands.

The protein localises to the secreted. Its function is as follows. Potent antimicrobial peptide with activity against bacteria and protozoa. Also has activity against fungi. Probably acts by disturbing membrane functions with its amphipathic structure. In Phyllomedusa sauvagei (Sauvage's leaf frog), this protein is Dermaseptin-S5.